We begin with the raw amino-acid sequence, 406 residues long: Arginine deiminase (406 aa).

Catalysis depends on cysteine 396, which acts as the Amidino-cysteine intermediate.

Belongs to the arginine deiminase family.

It localises to the cytoplasm. The catalysed reaction is L-arginine + H2O = L-citrulline + NH4(+). It functions in the pathway amino-acid degradation; L-arginine degradation via ADI pathway; carbamoyl phosphate from L-arginine: step 1/2. In Vibrio vulnificus (strain CMCP6), this protein is Arginine deiminase.